The chain runs to 181 residues: Mating-type M-specific polypeptide Mc (181 aa).

The segment at residues 103-171 (TPRPPNAFIL…QHQKMYPGYK (69 aa)) is a DNA-binding region (HMG box).

The protein resides in the nucleus. Its subcellular location is the cytoplasm. It is found in the cytoskeleton. The protein localises to the microtubule organizing center. It localises to the spindle pole body. Its function is as follows. Mating type proteins are sequence specific DNA-binding proteins that act as master switches in yeast differentiation by controlling gene expression in a cell type-specific fashion. Positive regulator of MFM genes. The HMG box recognizes the DNA sequence 5'-AACAAAG-3'. Required for conjugation and efficient meiosis. This chain is Mating-type M-specific polypeptide Mc (mat3-Mc), found in Schizosaccharomyces pombe (Fission yeast).